Here is a 216-residue protein sequence, read N- to C-terminus: Protein-L-isoaspartate O-methyltransferase 1 (216 aa).

The active site involves Ser-60.

This sequence belongs to the methyltransferase superfamily. L-isoaspartyl/D-aspartyl protein methyltransferase family.

The protein resides in the cytoplasm. It catalyses the reaction [protein]-L-isoaspartate + S-adenosyl-L-methionine = [protein]-L-isoaspartate alpha-methyl ester + S-adenosyl-L-homocysteine. Catalyzes the methyl esterification of L-isoaspartyl residues in peptides and proteins that result from spontaneous decomposition of normal L-aspartyl and L-asparaginyl residues. It plays a role in the repair and/or degradation of damaged proteins. In Archaeoglobus fulgidus (strain ATCC 49558 / DSM 4304 / JCM 9628 / NBRC 100126 / VC-16), this protein is Protein-L-isoaspartate O-methyltransferase 1 (pcm1).